The following is a 205-amino-acid chain: Dr1-associated corepressor (205 aa).

The Histone-fold domain occupies Pro-14 to Glu-77. The disordered stretch occupies residues Pro-91–Ser-205. The segment covering Glu-98–Ala-108 has biased composition (basic and acidic residues). Positions Pro-114 to Gly-125 are enriched in gly residues. Positions Ser-138–Thr-155 are enriched in acidic residues. Residues Pro-184 to Ser-193 show a composition bias toward pro residues. Residues Pro-195–Ser-205 are compositionally biased toward acidic residues.

It belongs to the NC2 alpha/DRAP1 family. In terms of assembly, heterodimer with DR1. Binds BTAF1. In terms of processing, phosphorylation reduces DNA binding, but has no effect on heterodimerization and TBP binding. Ubiquitous. Highly expressed in adult testis, heart, skeletal muscle, pancreas and brain, and in fetal brain, liver and kidney.

It localises to the nucleus. Functionally, the association of the DR1/DRAP1 heterodimer with TBP results in a functional repression of both activated and basal transcription of class II genes. This interaction precludes the formation of a transcription-competent complex by inhibiting the association of TFIIA and/or TFIIB with TBP. Can bind to DNA on its own. The polypeptide is Dr1-associated corepressor (DRAP1) (Homo sapiens (Human)).